A 315-amino-acid chain; its full sequence is Glutathione synthetase (315 aa).

Positions 125–310 constitute an ATP-grasp domain; it reads KLFTAWFSDL…ITGMLMDAIE (186 aa). Arg-256 is a glycosylation site (N-beta-linked (GlcNAc) arginine). The Mg(2+) site is built by Glu-281 and Asn-283.

It belongs to the prokaryotic GSH synthase family. The cofactor is Mg(2+). It depends on Mn(2+) as a cofactor. In terms of processing, glycosylation at Arg-256 by NleB enhances the glutathione synthetase activity, leading to an increase in glutathione production. Glycosylation may promote C.rodentium survival in oxidative stress conditions.

It catalyses the reaction gamma-L-glutamyl-L-cysteine + glycine + ATP = glutathione + ADP + phosphate + H(+). It functions in the pathway sulfur metabolism; glutathione biosynthesis; glutathione from L-cysteine and L-glutamate: step 2/2. This chain is Glutathione synthetase, found in Citrobacter rodentium.